A 608-amino-acid chain; its full sequence is DNA mismatch repair protein MutL (608 aa).

The interval 363 to 397 (ASLAMARKPDPPRFHETARPQPDPRHTPGTESVSV) is disordered. The span at 369–390 (RKPDPPRFHETARPQPDPRHTP) shows a compositional bias: basic and acidic residues.

The protein belongs to the DNA mismatch repair MutL/HexB family.

In terms of biological role, this protein is involved in the repair of mismatches in DNA. It is required for dam-dependent methyl-directed DNA mismatch repair. May act as a 'molecular matchmaker', a protein that promotes the formation of a stable complex between two or more DNA-binding proteins in an ATP-dependent manner without itself being part of a final effector complex. This is DNA mismatch repair protein MutL from Pelobacter propionicus (strain DSM 2379 / NBRC 103807 / OttBd1).